Here is a 256-residue protein sequence, read N- to C-terminus: Imidazole glycerol phosphate synthase subunit HisF (256 aa).

Active-site residues include D12 and D131.

Belongs to the HisA/HisF family. As to quaternary structure, heterodimer of HisH and HisF.

It is found in the cytoplasm. It catalyses the reaction 5-[(5-phospho-1-deoxy-D-ribulos-1-ylimino)methylamino]-1-(5-phospho-beta-D-ribosyl)imidazole-4-carboxamide + L-glutamine = D-erythro-1-(imidazol-4-yl)glycerol 3-phosphate + 5-amino-1-(5-phospho-beta-D-ribosyl)imidazole-4-carboxamide + L-glutamate + H(+). Its pathway is amino-acid biosynthesis; L-histidine biosynthesis; L-histidine from 5-phospho-alpha-D-ribose 1-diphosphate: step 5/9. IGPS catalyzes the conversion of PRFAR and glutamine to IGP, AICAR and glutamate. The HisF subunit catalyzes the cyclization activity that produces IGP and AICAR from PRFAR using the ammonia provided by the HisH subunit. The protein is Imidazole glycerol phosphate synthase subunit HisF of Pseudomonas paraeruginosa (strain DSM 24068 / PA7) (Pseudomonas aeruginosa (strain PA7)).